The sequence spans 175 residues: Large ribosomal subunit protein uL16 (175 aa).

The protein belongs to the universal ribosomal protein uL16 family.

In Caldivirga maquilingensis (strain ATCC 700844 / DSM 13496 / JCM 10307 / IC-167), this protein is Large ribosomal subunit protein uL16.